The chain runs to 455 residues: Probable cytosolic iron-sulfur protein assembly protein 1 (455 aa).

WD repeat units lie at residues Gly31–Ala70, Gly90–Ser129, Gly163–Cys202, Glu208–Cys247, Gly253–Ala292, Tyr318–Ser365, and His380–Thr453.

The protein belongs to the WD repeat CIA1 family.

In terms of biological role, essential component of the cytosolic iron-sulfur (Fe/S) protein assembly machinery. Required for the maturation of extramitochondrial Fe/S proteins. The sequence is that of Probable cytosolic iron-sulfur protein assembly protein 1 from Mycosarcoma maydis (Corn smut fungus).